The primary structure comprises 196 residues: Pyridoxine/pyridoxamine 5'-phosphate oxidase (196 aa).

FMN contacts are provided by residues 44-49 (RTVLLK), 59-60 (YT), R65, K66, and Q88. K49 provides a ligand contact to substrate. The substrate site is built by Y106, R110, and S114. Residues 123–124 (QS) and W169 each bind FMN. 175 to 177 (RLH) lines the substrate pocket. R179 lines the FMN pocket.

The protein belongs to the pyridoxamine 5'-phosphate oxidase family. Homodimer. FMN serves as cofactor.

The catalysed reaction is pyridoxamine 5'-phosphate + O2 + H2O = pyridoxal 5'-phosphate + H2O2 + NH4(+). It catalyses the reaction pyridoxine 5'-phosphate + O2 = pyridoxal 5'-phosphate + H2O2. The protein operates within cofactor metabolism; pyridoxal 5'-phosphate salvage; pyridoxal 5'-phosphate from pyridoxamine 5'-phosphate: step 1/1. Its pathway is cofactor metabolism; pyridoxal 5'-phosphate salvage; pyridoxal 5'-phosphate from pyridoxine 5'-phosphate: step 1/1. Functionally, catalyzes the oxidation of either pyridoxine 5'-phosphate (PNP) or pyridoxamine 5'-phosphate (PMP) into pyridoxal 5'-phosphate (PLP). This chain is Pyridoxine/pyridoxamine 5'-phosphate oxidase, found in Alkalilimnicola ehrlichii (strain ATCC BAA-1101 / DSM 17681 / MLHE-1).